The sequence spans 126 residues: Histone H2B type 1-K (126 aa).

Positions 1–12 are enriched in low complexity; the sequence is MPEPAKSAPAPK. The tract at residues 1–36 is disordered; the sequence is MPEPAKSAPAPKKGSKKAVTKAQKKDGKKRKRSRKE. Residue P2 is modified to N-acetylproline. E3 carries the post-translational modification ADP-ribosyl glutamic acid. At K6 the chain carries N6-(2-hydroxyisobutyryl)lysine; alternate. At K6 the chain carries N6-(beta-hydroxybutyryl)lysine; alternate. The residue at position 6 (K6) is an N6-acetyllysine; alternate. K6 bears the N6-butyryllysine; alternate mark. K6 carries the post-translational modification N6-crotonyllysine; alternate. At K6 the chain carries N6-lactoyllysine; alternate. A Glycyl lysine isopeptide (Lys-Gly) (interchain with G-Cter in SUMO2); alternate cross-link involves residue K6. S7 bears the ADP-ribosylserine mark. At K12 the chain carries N6-(beta-hydroxybutyryl)lysine; alternate. An N6-acetyllysine; alternate mark is found at K12 and K13. Residues K12 and K13 each carry the N6-crotonyllysine; alternate modification. The residue at position 12 (K12) is an N6-lactoyllysine; alternate. The residue at position 13 (K13) is an N6-(2-hydroxyisobutyryl)lysine; alternate. S15 carries the phosphoserine; by STK4/MST1 modification. 4 positions are modified to N6-acetyllysine; alternate: K16, K17, K21, and K24. 4 positions are modified to N6-crotonyllysine; alternate: K16, K17, K21, and K24. N6-lactoyllysine; alternate occurs at positions 16, 17, 21, and 24. Residues K17 and K21 each carry the N6-(beta-hydroxybutyryl)lysine; alternate modification. K17 carries the post-translational modification N6-glutaryllysine; alternate. 2 positions are modified to N6-(2-hydroxyisobutyryl)lysine; alternate: K21 and K24. The residue at position 21 (K21) is an N6-butyryllysine; alternate. Residue K21 forms a Glycyl lysine isopeptide (Lys-Gly) (interchain with G-Cter in SUMO2); alternate linkage. N6-(2-hydroxyisobutyryl)lysine is present on K25. Residue K35 is modified to N6-(2-hydroxyisobutyryl)lysine; alternate. K35 is subject to N6-(beta-hydroxybutyryl)lysine; alternate. K35 carries the N6-crotonyllysine; alternate modification. At K35 the chain carries N6-glutaryllysine; alternate. K35 carries the post-translational modification N6-succinyllysine; alternate. K35 participates in a covalent cross-link: Glycyl lysine isopeptide (Lys-Gly) (interchain with G-Cter in ubiquitin); alternate. E36 carries the polyADP-ribosyl glutamic acid modification. Position 37 is a phosphoserine; by AMPK (S37). K44, K47, and K58 each carry N6-(2-hydroxyisobutyryl)lysine; alternate. The residue at position 44 (K44) is an N6-lactoyllysine; alternate. Residues K44 and K47 each carry the N6-glutaryllysine; alternate modification. K47 carries the N6-methyllysine; alternate modification. An N6,N6-dimethyllysine; alternate modification is found at K58. R80 is modified (dimethylated arginine). K86 is subject to N6-(2-hydroxyisobutyryl)lysine; alternate. K86 carries the N6-(beta-hydroxybutyryl)lysine; alternate modification. Position 86 is an N6-acetyllysine; alternate (K86). Position 86 is an N6-lactoyllysine; alternate (K86). K86 is subject to N6,N6,N6-trimethyllysine; alternate. Omega-N-methylarginine occurs at positions 87 and 93. The residue at position 109 (K109) is an N6-(2-hydroxyisobutyryl)lysine; alternate. Position 109 is an N6-lactoyllysine; alternate (K109). N6-glutaryllysine; alternate is present on K109. K109 is modified (N6-methyllysine; alternate). O-linked (GlcNAc) serine glycosylation occurs at S113. At T116 the chain carries Phosphothreonine. Residues K117 and K121 each carry the N6-(2-hydroxyisobutyryl)lysine; alternate modification. Residues K117 and K121 each carry the N6-(beta-hydroxybutyryl)lysine; alternate modification. 2 positions are modified to N6-lactoyllysine; alternate: K117 and K121. N6-glutaryllysine; alternate is present on residues K117 and K121. K117 and K121 each carry N6-succinyllysine; alternate. Position 117 is an N6-malonyllysine; alternate (K117). Position 117 is an N6-methylated lysine; alternate (K117). K121 participates in a covalent cross-link: Glycyl lysine isopeptide (Lys-Gly) (interchain with G-Cter in ubiquitin); alternate.

This sequence belongs to the histone H2B family. As to quaternary structure, the nucleosome is a histone octamer containing two molecules each of H2A, H2B, H3 and H4 assembled in one H3-H4 heterotetramer and two H2A-H2B heterodimers. The octamer wraps approximately 147 bp of DNA. In terms of processing, monoubiquitination at Lys-35 (H2BK34Ub) by the MSL1/MSL2 dimer is required for histone H3 'Lys-4' (H3K4me) and 'Lys-79' (H3K79me) methylation and transcription activation at specific gene loci, such as HOXA9 and MEIS1 loci. Similarly, monoubiquitination at Lys-121 (H2BK120Ub) by the RNF20/40 complex gives a specific tag for epigenetic transcriptional activation and is also prerequisite for histone H3 'Lys-4' and 'Lys-79' methylation. It also functions cooperatively with the FACT dimer to stimulate elongation by RNA polymerase II. H2BK120Ub also acts as a regulator of mRNA splicing: deubiquitination by USP49 is required for efficient cotranscriptional splicing of a large set of exons. Post-translationally, phosphorylation at Ser-37 (H2BS36ph) by AMPK in response to stress promotes transcription. Phosphorylated on Ser-15 (H2BS14ph) by STK4/MST1 during apoptosis; which facilitates apoptotic chromatin condensation. Also phosphorylated on Ser-15 in response to DNA double strand breaks (DSBs), and in correlation with somatic hypermutation and immunoglobulin class-switch recombination. GlcNAcylation at Ser-113 promotes monoubiquitination of Lys-121. It fluctuates in response to extracellular glucose, and associates with transcribed genes. In terms of processing, ADP-ribosylated by PARP1 or PARP2 on Ser-7 (H2BS6ADPr) in response to DNA damage. H2BS6ADPr promotes recruitment of CHD1L. Mono-ADP-ribosylated on Glu-3 (H2BE2ADPr) by PARP3 in response to single-strand breaks. Poly ADP-ribosylation on Glu-36 (H2BE35ADPr) by PARP1 regulates adipogenesis: it inhibits phosphorylation at Ser-37 (H2BS36ph), thereby blocking expression of pro-adipogenetic genes. Post-translationally, crotonylation (Kcr) is specifically present in male germ cells and marks testis-specific genes in post-meiotic cells, including X-linked genes that escape sex chromosome inactivation in haploid cells. Crotonylation marks active promoters and enhancers and confers resistance to transcriptional repressors. It is also associated with post-meiotically activated genes on autosomes. Lactylated in macrophages by EP300/P300 by using lactoyl-CoA directly derived from endogenous or exogenous lactate, leading to stimulates gene transcription.

Its subcellular location is the nucleus. It is found in the chromosome. Core component of nucleosome. Nucleosomes wrap and compact DNA into chromatin, limiting DNA accessibility to the cellular machineries which require DNA as a template. Histones thereby play a central role in transcription regulation, DNA repair, DNA replication and chromosomal stability. DNA accessibility is regulated via a complex set of post-translational modifications of histones, also called histone code, and nucleosome remodeling. Its function is as follows. Has broad antibacterial activity. May contribute to the formation of the functional antimicrobial barrier of the colonic epithelium, and to the bactericidal activity of amniotic fluid. This is Histone H2B type 1-K from Homo sapiens (Human).